The primary structure comprises 40 residues: Metallothionein-1 (40 aa).

It belongs to the metallothionein superfamily. Type 5 family.

Functionally, this protein binds cations of several transition elements. It is thought to be involved in detoxification processes. This Drosophila ananassae (Fruit fly) protein is Metallothionein-1 (MtnA).